The primary structure comprises 121 residues: Mediator of RNA polymerase II transcription subunit 22 (121 aa).

This sequence belongs to the Mediator complex subunit 22 family. In terms of assembly, component of the Mediator complex.

Its subcellular location is the nucleus. Functionally, component of the Mediator complex, a coactivator involved in the regulated transcription of nearly all RNA polymerase II-dependent genes. Mediator functions as a bridge to convey information from gene-specific regulatory proteins to the basal RNA polymerase II transcription machinery. Mediator is recruited to promoters by direct interactions with regulatory proteins and serves as a scaffold for the assembly of a functional preinitiation complex with RNA polymerase II and the general transcription factors. The sequence is that of Mediator of RNA polymerase II transcription subunit 22 (SRB6) from Eremothecium gossypii (strain ATCC 10895 / CBS 109.51 / FGSC 9923 / NRRL Y-1056) (Yeast).